The following is a 328-amino-acid chain: MRIIFWGTPDYSISSLDILIKSNHEIIAVVSQPDKKRSRGNKLIASPIKSFAEQEYIKIYTPEKIRNNIPFINELKSLSCDLFIVIAYGKILPKEILEIPKFGCWNAHASLLPRWRGAAPIQWSLMKGDEYTGVGIMKMSEGLDTGDLLLEEKIKIDNTDNLNTLTEKLSILSAKLLLKAVSFLEKNINKKINSKLTKQNTLGREITYARMIEKSDFKVDWGNEAIKISRKIKALYPRANTNFRGKNLKILKIKVLTSDEIKNAKYHLMSNYSKPGIILAVIENEGIIISTKTDPIILLEAKIEGKNISTKKQLIQQLKPSVGEYFLD.

(6S)-5,6,7,8-tetrahydrofolate is bound at residue 110-113; that stretch reads SLLP.

This sequence belongs to the Fmt family.

The catalysed reaction is L-methionyl-tRNA(fMet) + (6R)-10-formyltetrahydrofolate = N-formyl-L-methionyl-tRNA(fMet) + (6S)-5,6,7,8-tetrahydrofolate + H(+). Attaches a formyl group to the free amino group of methionyl-tRNA(fMet). The formyl group appears to play a dual role in the initiator identity of N-formylmethionyl-tRNA by promoting its recognition by IF2 and preventing the misappropriation of this tRNA by the elongation apparatus. The polypeptide is Methionyl-tRNA formyltransferase (Prochlorococcus marinus (strain MIT 9215)).